The chain runs to 357 residues: UDP-N-acetylglucosamine--N-acetylmuramyl-(pentapeptide) pyrophosphoryl-undecaprenol N-acetylglucosamine transferase (357 aa).

Residues 10–12 (TGG), Asn124, Ser189, Ile244, and Gln289 each bind UDP-N-acetyl-alpha-D-glucosamine.

This sequence belongs to the glycosyltransferase 28 family. MurG subfamily.

It is found in the cell membrane. It catalyses the reaction Mur2Ac(oyl-L-Ala-gamma-D-Glu-L-Lys-D-Ala-D-Ala)-di-trans,octa-cis-undecaprenyl diphosphate + UDP-N-acetyl-alpha-D-glucosamine = beta-D-GlcNAc-(1-&gt;4)-Mur2Ac(oyl-L-Ala-gamma-D-Glu-L-Lys-D-Ala-D-Ala)-di-trans,octa-cis-undecaprenyl diphosphate + UDP + H(+). It participates in cell wall biogenesis; peptidoglycan biosynthesis. In terms of biological role, cell wall formation. Catalyzes the transfer of a GlcNAc subunit on undecaprenyl-pyrophosphoryl-MurNAc-pentapeptide (lipid intermediate I) to form undecaprenyl-pyrophosphoryl-MurNAc-(pentapeptide)GlcNAc (lipid intermediate II). The protein is UDP-N-acetylglucosamine--N-acetylmuramyl-(pentapeptide) pyrophosphoryl-undecaprenol N-acetylglucosamine transferase of Lactococcus lactis subsp. lactis (strain IL1403) (Streptococcus lactis).